A 156-amino-acid chain; its full sequence is Transcription inhibitor protein Gfh1 (156 aa).

Positions 1 to 74 (MAREVKLTKA…LEDILSRAVI (74 aa)) form a coiled coil. Residues Glu-20 and Glu-24 each contribute to the Zn(2+) site.

The protein belongs to the GreA/GreB family. In terms of assembly, interacts with RNAP.

Inhibits all catalytic activities of RNA polymerase (RNAP) by partially occluding its substrate-binding site and preventing NTP binding. The polypeptide is Transcription inhibitor protein Gfh1 (gfh1) (Thermus thermophilus (strain ATCC 27634 / DSM 579 / HB8)).